We begin with the raw amino-acid sequence, 32 residues long: U5-ctenitoxin-Pn1a (32 aa).

3 disulfide bridges follow: Cys3-Cys16, Cys9-Cys21, and Cys15-Cys30.

As to expression, expressed by the venom gland.

The protein localises to the secreted. In terms of biological role, blocks voltage-gated sodium channels (Nav). Causes tail erection, scratching and a reduction in mobility at a dose level of 1.40 mg/mouse. The chain is U5-ctenitoxin-Pn1a from Phoneutria nigriventer (Brazilian armed spider).